A 454-amino-acid polypeptide reads, in one-letter code: NADP-specific glutamate dehydrogenase (454 aa).

Serine 2 bears the N-acetylserine mark. The active site involves lysine 114.

Belongs to the Glu/Leu/Phe/Val dehydrogenases family. In terms of assembly, homohexamer.

The enzyme catalyses L-glutamate + NADP(+) + H2O = 2-oxoglutarate + NH4(+) + NADPH + H(+). The protein is NADP-specific glutamate dehydrogenase (GDH) of Neurospora intermedia.